A 141-amino-acid polypeptide reads, in one-letter code: 3-hydroxyacyl-[acyl-carrier-protein] dehydratase FabZ (141 aa).

His48 is a catalytic residue.

The protein belongs to the thioester dehydratase family. FabZ subfamily.

It is found in the cytoplasm. The enzyme catalyses a (3R)-hydroxyacyl-[ACP] = a (2E)-enoyl-[ACP] + H2O. Its function is as follows. Involved in unsaturated fatty acids biosynthesis. Catalyzes the dehydration of short chain beta-hydroxyacyl-ACPs and long chain saturated and unsaturated beta-hydroxyacyl-ACPs. The protein is 3-hydroxyacyl-[acyl-carrier-protein] dehydratase FabZ of Bacillus subtilis (strain 168).